We begin with the raw amino-acid sequence, 241 residues long: Ribosome-inactivating protein luffaculin 1 (241 aa).

N-linked (GlcNAc...) asparagine glycosylation is found at asparagine 28, asparagine 33, asparagine 77, and asparagine 84. Glutamate 159 is a catalytic residue. An N-linked (GlcNAc...) asparagine glycan is attached at asparagine 205.

This sequence belongs to the ribosome-inactivating protein family. Type 1 RIP subfamily.

It catalyses the reaction Endohydrolysis of the N-glycosidic bond at one specific adenosine on the 28S rRNA.. This chain is Ribosome-inactivating protein luffaculin 1, found in Luffa acutangula (Ridged gourd).